The sequence spans 80 residues: Probable antimicrobial peptide clone Con10 (80 aa).

Positions 1-24 (MQYKTKTFLVIFLAYLVVTNEAEA) are cleaved as a signal peptide. Residues 56-80 (EIEDFFDPYQRELDLELERLLSQLQ) constitute a propeptide that is removed on maturation.

The protein belongs to the non-disulfide-bridged peptide (NDBP) superfamily. Medium-length antimicrobial peptide (group 3) family. In terms of tissue distribution, expressed by the venom gland.

The protein localises to the secreted. Its subcellular location is the target cell membrane. Antimicrobial peptide. Has antifungal activity against all strains tested (MIC=12.5-200 uM). May act by disrupting the integrity of the bacterial cell membrane. This Opisthacanthus cayaporum (South American scorpion) protein is Probable antimicrobial peptide clone Con10.